Reading from the N-terminus, the 178-residue chain is CASP-like protein 2U3 (178 aa).

Topologically, residues methionine 1–arginine 4 are cytoplasmic. A helical membrane pass occupies residues valine 5–methionine 25. Over alanine 26–alanine 52 the chain is Extracellular. Residues phenylalanine 53 to leucine 73 form a helical membrane-spanning segment. At serine 74–arginine 80 the chain is on the cytoplasmic side. The helical transmembrane segment at valine 81–alanine 101 threads the bilayer. Topologically, residues alanine 102–asparagine 132 are extracellular. Residues leucine 133–isoleucine 153 traverse the membrane as a helical segment. Topologically, residues leucine 154–valine 178 are cytoplasmic.

The protein belongs to the Casparian strip membrane proteins (CASP) family. As to quaternary structure, homodimer and heterodimers.

Its subcellular location is the cell membrane. This Pteridium aquilinum subsp. aquilinum (Bracken fern) protein is CASP-like protein 2U3.